Here is a 293-residue protein sequence, read N- to C-terminus: Pantothenate synthetase (293 aa).

38–45 (MGALHEGH) lines the ATP pocket. The Proton donor role is filled by histidine 45. Glutamine 69 is a (R)-pantoate binding site. Glutamine 69 provides a ligand contact to beta-alanine. 155–158 (GEKD) serves as a coordination point for ATP. Glutamine 161 is a binding site for (R)-pantoate. 192–195 (QSSR) is an ATP binding site.

This sequence belongs to the pantothenate synthetase family. In terms of assembly, homodimer.

The protein localises to the cytoplasm. The catalysed reaction is (R)-pantoate + beta-alanine + ATP = (R)-pantothenate + AMP + diphosphate + H(+). It functions in the pathway cofactor biosynthesis; (R)-pantothenate biosynthesis; (R)-pantothenate from (R)-pantoate and beta-alanine: step 1/1. In terms of biological role, catalyzes the condensation of pantoate with beta-alanine in an ATP-dependent reaction via a pantoyl-adenylate intermediate. This Hyphomonas neptunium (strain ATCC 15444) protein is Pantothenate synthetase.